We begin with the raw amino-acid sequence, 216 residues long: MRINTVLFDLDGTLINTNELIISSFLHTLNTYYPNQYKREDVLPFIGPSLHDTFSKIDESKVEEMITSYREFNHDHHDELVEEYETVYETVRELKKQGYKVGIVTTKARQTVEMGLQLSKLDEFFDVVVTIDDVEHVKPHPEPLQKALELLDAKPEEALMVGDNHHDIVGGQNAGTKTAAVSWTLKGRAYLEAYKPDFMLDKMSDLLPILSNMNRS.

Aspartate 9 acts as the Nucleophile in catalysis.

This sequence belongs to the HAD-like hydrolase superfamily. PpaX family. The cofactor is Mg(2+).

The enzyme catalyses diphosphate + H2O = 2 phosphate + H(+). Hydrolyzes pyrophosphate formed during P-Ser-HPr dephosphorylation by HPrK/P. Might play a role in controlling the intracellular pyrophosphate pool. In Bacillus cereus (strain G9842), this protein is Pyrophosphatase PpaX.